We begin with the raw amino-acid sequence, 178 residues long: Long polar fimbria protein A (178 aa).

The signal sequence occupies residues methionine 1 to alanine 24.

This sequence belongs to the fimbrial protein family.

The protein localises to the fimbrium. The sequence is that of Long polar fimbria protein A (lpfA) from Salmonella typhimurium (strain LT2 / SGSC1412 / ATCC 700720).